The sequence spans 181 residues: Oligoribonuclease (181 aa).

The Exonuclease domain maps to 8 to 171 (LIWIDLEMTG…DDIRESVAEL (164 aa)). Tyr129 is a catalytic residue.

Belongs to the oligoribonuclease family.

Its subcellular location is the cytoplasm. 3'-to-5' exoribonuclease specific for small oligoribonucleotides. The chain is Oligoribonuclease from Yersinia pseudotuberculosis serotype O:1b (strain IP 31758).